Reading from the N-terminus, the 469-residue chain is Lactonohydrolase oryH (469 aa).

A signal peptide spans 1–20 (MYLSLRLVSLALCIAPLASA).

This sequence belongs to the SMP-30/CGR1 family.

The protein operates within secondary metabolite biosynthesis. Functionally, lactonohydrolase; part of the gene cluster that mediates the biosynthesis of oryzines, natural products with an unusual maleidride backbone. The two subunits of the fungal fatty acid synthase oryfasA and oryfasB probably form octenoic acid. This fatty acid is most likely activated by the acyl-CoA ligase oryP to give octenyl-CoA before the citrate synthase-like protein oryE catalyzes condensation with oxaloacetate to form tricarboxylic acid. The next steps of the pathways are conjectural, but a favorite possible route has been proposed, beginning with decarboxylation and concomitant dehydration by the decarboxylase oryM, followed by tautomerization, which may lead to the production of a diene intermediate. Reduction of this diene intermediate could give the known metabolite piliformic acid. On the pathway to oryzine B and oryzine A, however, hydroxylation of the diene by the alpha-ketoglutarate-dependent dioxygenase oryG and lactonisation by the lactonohydrolases oryH or oryL could give oryzine B directly. Finally, enoyl reduction by the dehydrogenase oryD would then convert oryzine B into oryzine A. The protein is Lactonohydrolase oryH of Aspergillus oryzae (strain ATCC 42149 / RIB 40) (Yellow koji mold).